We begin with the raw amino-acid sequence, 264 residues long: Zinc import ATP-binding protein ZnuC (264 aa).

One can recognise an ABC transporter domain in the interval 11 to 226; it reads IELQNIKVVF…PTFIHLFGDQ (216 aa). Residue 43–50 participates in ATP binding; that stretch reads GPNGGGKS.

This sequence belongs to the ABC transporter superfamily. Zinc importer (TC 3.A.1.15.5) family. The complex is composed of two ATP-binding proteins (ZnuC), two transmembrane proteins (ZnuB) and a solute-binding protein (ZnuA).

It localises to the cell inner membrane. It carries out the reaction Zn(2+)(out) + ATP(in) + H2O(in) = Zn(2+)(in) + ADP(in) + phosphate(in) + H(+)(in). In terms of biological role, part of the ABC transporter complex ZnuABC involved in zinc import. Responsible for energy coupling to the transport system. The polypeptide is Zinc import ATP-binding protein ZnuC (Mannheimia succiniciproducens (strain KCTC 0769BP / MBEL55E)).